We begin with the raw amino-acid sequence, 304 residues long: tRNA-5-methyluridine(54) 2-sulfurtransferase (304 aa).

Residues cysteine 3, cysteine 6, cysteine 22, and histidine 25 each coordinate Zn(2+). Residues alanine 53 and isoleucine 79 each coordinate ATP. [4Fe-4S] cluster contacts are provided by cysteine 131 and cysteine 134. Residues arginine 138 and glycine 157 each contribute to the ATP site. Residue cysteine 224 participates in [4Fe-4S] cluster binding. Zn(2+)-binding residues include cysteine 274, cysteine 277, cysteine 286, and cysteine 289.

It belongs to the TtcA family. TtuA subfamily. Homodimer. Requires [4Fe-4S] cluster as cofactor. The cofactor is Mg(2+).

It catalyses the reaction 5-methyluridine(54) in tRNA + hydrogen sulfide + ATP = 5-methyl-2-thiouridine(54) in tRNA + AMP + diphosphate. It participates in tRNA modification. Its function is as follows. Catalyzes the ATP-dependent 2-thiolation of 5-methyluridine residue at position 54 in the T loop of tRNAs, leading to 5-methyl-2-thiouridine (m(5)s(2)U or s(2)T). This modification allows thermal stabilization of tRNAs in thermophilic microorganisms, and is required for cell growth at high temperatures. Can use free sulfide as sulfur source in vitro. This chain is tRNA-5-methyluridine(54) 2-sulfurtransferase, found in Thermotoga maritima (strain ATCC 43589 / DSM 3109 / JCM 10099 / NBRC 100826 / MSB8).